The sequence spans 135 residues: UPF0329 protein ECU07_1860/ECU10_0040/ECU11_2100 (135 aa).

This sequence belongs to the UPF0329 family.

This is UPF0329 protein ECU07_1860/ECU10_0040/ECU11_2100 from Encephalitozoon cuniculi (strain GB-M1) (Microsporidian parasite).